Here is a 312-residue protein sequence, read N- to C-terminus: D-alanine--D-alanine ligase (312 aa).

The 201-residue stretch at lysine 108–serine 308 folds into the ATP-grasp domain. Alanine 138–tyrosine 193 is an ATP binding site. Aspartate 262, glutamate 275, and asparagine 277 together coordinate Mg(2+).

Belongs to the D-alanine--D-alanine ligase family. Requires Mg(2+) as cofactor. The cofactor is Mn(2+).

It is found in the cytoplasm. It catalyses the reaction 2 D-alanine + ATP = D-alanyl-D-alanine + ADP + phosphate + H(+). The protein operates within cell wall biogenesis; peptidoglycan biosynthesis. Functionally, cell wall formation. The sequence is that of D-alanine--D-alanine ligase from Burkholderia pseudomallei (strain 668).